Consider the following 570-residue polypeptide: Hydroxylamine reductase (570 aa).

[4Fe-4S] cluster contacts are provided by Cys5, Cys8, Cys17, and Cys23. Positions 266, 290, 334, 425, 453, 478, 513, and 515 each coordinate hybrid [4Fe-2O-2S] cluster. Cysteine persulfide is present on Cys425.

It belongs to the HCP family. [4Fe-4S] cluster serves as cofactor. Requires hybrid [4Fe-2O-2S] cluster as cofactor.

It localises to the cytoplasm. It catalyses the reaction A + NH4(+) + H2O = hydroxylamine + AH2 + H(+). Functionally, catalyzes the reduction of hydroxylamine to form NH(3) and H(2)O. The polypeptide is Hydroxylamine reductase (Clostridium botulinum (strain Loch Maree / Type A3)).